Here is a 791-residue protein sequence, read N- to C-terminus: mRNA 3'-end-processing protein RNA14 (791 aa).

HAT repeat units follow at residues 44–76, 78–112, 119–154, 165–198, 231–263, and 273–305; these read DNQE…YELN, DEKE…GVTD, KARG…FLQS, QKID…WENE, KSLK…LEKE, and VNDK…YLLV. Over residues 379–388 the composition is skewed to basic and acidic residues; it reads IDPATDKDNI. Disordered regions lie at residues 379–449 and 725–745; these read IDPA…APSS and QKTR…KPEE. Over residues 389–411 the composition is skewed to acidic residues; the sequence is QEDDDDNEEEEEEENDNDNDNDN. Low complexity predominate over residues 427–442; it reads NPNGGQNGSNSENNGE.

It is found in the nucleus. The protein localises to the cytoplasm. In terms of biological role, component of the cleavage factor IA (CFIA) complex, which is involved in the endonucleolytic cleavage during polyadenylation-dependent pre-mRNA 3'-end formation. In Candida albicans (strain SC5314 / ATCC MYA-2876) (Yeast), this protein is mRNA 3'-end-processing protein RNA14 (RNA14).